A 207-amino-acid chain; its full sequence is Large ribosomal subunit protein uL4 (207 aa).

A disordered region spans residues Arg-45–Ile-78.

Belongs to the universal ribosomal protein uL4 family. In terms of assembly, part of the 50S ribosomal subunit.

One of the primary rRNA binding proteins, this protein initially binds near the 5'-end of the 23S rRNA. It is important during the early stages of 50S assembly. It makes multiple contacts with different domains of the 23S rRNA in the assembled 50S subunit and ribosome. In terms of biological role, forms part of the polypeptide exit tunnel. This Geobacillus sp. (strain WCH70) protein is Large ribosomal subunit protein uL4.